The sequence spans 1940 residues: Myosin-2 (1940 aa).

The region spanning 33-82 is the Myosin N-terminal SH3-like domain; sequence DAKTSVFVAEPKESFVKGTVQSREGGKVTVKTEAGATLTVKEDQVFPMNP. 2 positions are modified to phosphothreonine: Thr-64 and Thr-69. Positions 86-783 constitute a Myosin motor domain; it reads DKIEDMAMMT…LLGLLEEMRD (698 aa). Lys-130 carries the post-translational modification N6,N6,N6-trimethyllysine. Position 179 to 186 (179 to 186) interacts with ATP; that stretch reads GESGAGKT. The residue at position 389 (Tyr-389) is a Phosphotyrosine. At Ser-392 the chain carries Phosphoserine. Thr-419 carries the phosphothreonine modification. Ser-625 carries the post-translational modification Phosphoserine. The interval 660–682 is actin-binding; it reads LNKLMTNLRSTHPHFVRCIIPNE. At His-758 the chain carries Pros-methylhistidine. The tract at residues 762–776 is actin-binding; sequence KFGHTKVFFKAGLLG. An IQ domain is found at 786–815; that stretch reads LAQLITRTQARCRGFLARVEYQKMVERRES. Residues 844–1940 adopt a coiled-coil conformation; it reads LLKSAETEKE…EVHTKVISEE (1097 aa). 4 positions are modified to phosphoserine: Ser-1093, Ser-1097, Ser-1163, and Ser-1238. Positions 1154 to 1173 are disordered; it reads RLEEAGGATSAQIEMNKKRE. Thr-1242 bears the Phosphothreonine mark. Position 1244 is a phosphoserine (Ser-1244). Residue Thr-1256 is modified to Phosphothreonine. Ser-1262 is modified (phosphoserine). Thr-1287 is subject to Phosphothreonine. 4 positions are modified to phosphoserine: Ser-1289, Ser-1293, Ser-1304, and Ser-1307. A Phosphotyrosine modification is found at Tyr-1465. Thr-1468 is subject to Phosphothreonine. Ser-1475 bears the Phosphoserine mark. Tyr-1493 is modified (phosphotyrosine). The residue at position 1496 (Ser-1496) is a Phosphoserine. Thr-1502 carries the phosphothreonine modification. Residue Ser-1515 is modified to Phosphoserine. The residue at position 1518 (Thr-1518) is a Phosphothreonine. Phosphoserine is present on residues Ser-1543, Ser-1555, Ser-1575, Ser-1601, Ser-1715, and Ser-1727. Phosphothreonine occurs at positions 1731 and 1737. Ser-1740 carries the post-translational modification Phosphoserine. Residues 1884–1920 are disordered; that stretch reads KRQAEEAEEQSNTNLSKFRKLQHELEEAEERADIAES.

It belongs to the TRAFAC class myosin-kinesin ATPase superfamily. Myosin family. As to quaternary structure, muscle myosin is a hexameric protein that consists of 2 heavy chain subunits (MHC), 2 alkali light chain subunits (MLC) and 2 regulatory light chain subunits (MLC-2). Interacts with GCSAM.

Its subcellular location is the cytoplasm. The protein resides in the myofibril. In terms of biological role, myosins are actin-based motor molecules with ATPase activity essential for muscle contraction. This is Myosin-2 (MYH2) from Canis lupus familiaris (Dog).